The chain runs to 711 residues: Polyribonucleotide nucleotidyltransferase (711 aa).

The Mg(2+) site is built by D491 and D497. Residues P559–I618 form the KH domain. Residues G628–K696 form the S1 motif domain.

This sequence belongs to the polyribonucleotide nucleotidyltransferase family. Requires Mg(2+) as cofactor.

It localises to the cytoplasm. It carries out the reaction RNA(n+1) + phosphate = RNA(n) + a ribonucleoside 5'-diphosphate. In terms of biological role, involved in mRNA degradation. Catalyzes the phosphorolysis of single-stranded polyribonucleotides processively in the 3'- to 5'-direction. The protein is Polyribonucleotide nucleotidyltransferase of Janthinobacterium sp. (strain Marseille) (Minibacterium massiliensis).